The following is a 292-amino-acid chain: Formamidopyrimidine-DNA glycosylase (292 aa).

Pro-2 (schiff-base intermediate with DNA) is an active-site residue. The active-site Proton donor is the Glu-3. The Proton donor; for beta-elimination activity role is filled by Lys-58. Residues His-103, Arg-122, and Lys-165 each contribute to the DNA site. The segment at 256–292 (RVYDRALHPCPTPGCKGEISRITQGGRSSFFCSMCQK) adopts an FPG-type zinc-finger fold. Residue Arg-282 is the Proton donor; for delta-elimination activity of the active site.

It belongs to the FPG family. In terms of assembly, monomer. It depends on Zn(2+) as a cofactor.

It carries out the reaction Hydrolysis of DNA containing ring-opened 7-methylguanine residues, releasing 2,6-diamino-4-hydroxy-5-(N-methyl)formamidopyrimidine.. The catalysed reaction is 2'-deoxyribonucleotide-(2'-deoxyribose 5'-phosphate)-2'-deoxyribonucleotide-DNA = a 3'-end 2'-deoxyribonucleotide-(2,3-dehydro-2,3-deoxyribose 5'-phosphate)-DNA + a 5'-end 5'-phospho-2'-deoxyribonucleoside-DNA + H(+). Functionally, involved in base excision repair of DNA damaged by oxidation or by mutagenic agents. Acts as a DNA glycosylase that recognizes and removes damaged bases. Has a preference for oxidized purines, such as 7,8-dihydro-8-oxoguanine (8-oxoG). Has AP (apurinic/apyrimidinic) lyase activity and introduces nicks in the DNA strand. Cleaves the DNA backbone by beta-delta elimination to generate a single-strand break at the site of the removed base with both 3'- and 5'-phosphates. This chain is Formamidopyrimidine-DNA glycosylase, found in Methylocella silvestris (strain DSM 15510 / CIP 108128 / LMG 27833 / NCIMB 13906 / BL2).